The primary structure comprises 190 residues: Elongation factor P (190 aa).

Belongs to the elongation factor P family.

It localises to the cytoplasm. It functions in the pathway protein biosynthesis; polypeptide chain elongation. Functionally, involved in peptide bond synthesis. Stimulates efficient translation and peptide-bond synthesis on native or reconstituted 70S ribosomes in vitro. Probably functions indirectly by altering the affinity of the ribosome for aminoacyl-tRNA, thus increasing their reactivity as acceptors for peptidyl transferase. This Bartonella bacilliformis (strain ATCC 35685 / KC583 / Herrer 020/F12,63) protein is Elongation factor P.